We begin with the raw amino-acid sequence, 621 residues long: Endoglucanase 25 (621 aa).

A disordered region spans residues Met1–Arg26. Residues Met1 to Lys70 lie on the Cytoplasmic side of the membrane. The polarized targeting signal 1 (PTS1) stretch occupies residues Leu48–Leu49. The polarized targeting signal 2 (PTS2) stretch occupies residues Tyr59 to Leu62. A helical; Signal-anchor for type II membrane protein transmembrane segment spans residues Ile71 to Leu91. Residues Ile92–Pro621 are Extracellular-facing. Asn108 and Asn133 each carry an N-linked (GlcNAc...) asparagine glycan. The Nucleophile role is filled by Asp165. N-linked (GlcNAc...) asparagine glycosylation is found at Asn216, Asn324, Asn345, Asn408, and Asn425. Active-site residues include His513 and Asp561. An N-linked (GlcNAc...) asparagine glycan is attached at Asn567. Glu570 is an active-site residue.

It belongs to the glycosyl hydrolase 9 (cellulase E) family. Post-translationally, glycosylated. N-glycosylation of KOR in the endoplasmic reticulum followed by N-glycan modifications in the Golgi are essential for catalytic activity. As to expression, highly expressed in roots and stems, at intermediate levels in leaves and flowers, and at lower levels in siliques. Expressed in xylem (at protein level).

The protein resides in the cell membrane. The enzyme catalyses Endohydrolysis of (1-&gt;4)-beta-D-glucosidic linkages in cellulose, lichenin and cereal beta-D-glucans.. In terms of biological role, required for cellulose microfibril formation. Involved in cell wall assembly during cell elongation and cell plate maturation in cytokinesis. Required for secondary cell wall formation in the developing xylem. May cycle through different intracellular compartments, including plasma membrane. The sequence is that of Endoglucanase 25 (KOR) from Arabidopsis thaliana (Mouse-ear cress).